The chain runs to 937 residues: Isoleucine--tRNA ligase (937 aa).

Residues 58–68 (PYANGSIHIGH) carry the 'HIGH' region motif. E561 is an L-isoleucyl-5'-AMP binding site. The 'KMSKS' region signature appears at 602–606 (KMSKS). K605 contributes to the ATP binding site. Zn(2+) contacts are provided by C900, C903, C920, and C923.

This sequence belongs to the class-I aminoacyl-tRNA synthetase family. IleS type 1 subfamily. Monomer. The cofactor is Zn(2+).

Its subcellular location is the cytoplasm. The catalysed reaction is tRNA(Ile) + L-isoleucine + ATP = L-isoleucyl-tRNA(Ile) + AMP + diphosphate. Catalyzes the attachment of isoleucine to tRNA(Ile). As IleRS can inadvertently accommodate and process structurally similar amino acids such as valine, to avoid such errors it has two additional distinct tRNA(Ile)-dependent editing activities. One activity is designated as 'pretransfer' editing and involves the hydrolysis of activated Val-AMP. The other activity is designated 'posttransfer' editing and involves deacylation of mischarged Val-tRNA(Ile). The chain is Isoleucine--tRNA ligase from Photorhabdus laumondii subsp. laumondii (strain DSM 15139 / CIP 105565 / TT01) (Photorhabdus luminescens subsp. laumondii).